Here is a 559-residue protein sequence, read N- to C-terminus: Glutamine--tRNA ligase (559 aa).

The short motif at 44-54 (PEPNGYLHIGH) is the 'HIGH' region element. ATP contacts are provided by residues 45–47 (EPN) and 51–57 (HIGHAKS). L-glutamine-binding residues include D77 and Y222. ATP is bound by residues T241 and 272 to 273 (RL). Positions 279–283 (LTSKR) match the 'KMSKS' region motif.

The protein belongs to the class-I aminoacyl-tRNA synthetase family. As to quaternary structure, monomer.

The protein localises to the cytoplasm. The enzyme catalyses tRNA(Gln) + L-glutamine + ATP = L-glutaminyl-tRNA(Gln) + AMP + diphosphate. In Actinobacillus succinogenes (strain ATCC 55618 / DSM 22257 / CCUG 43843 / 130Z), this protein is Glutamine--tRNA ligase.